Here is a 208-residue protein sequence, read N- to C-terminus: Uracil phosphoribosyltransferase (208 aa).

5-phospho-alpha-D-ribose 1-diphosphate is bound by residues arginine 78, arginine 103, and 130–138; that span reads DPMLATGGS. Residues isoleucine 193 and 198 to 200 each bind uracil; that span reads GDA. Aspartate 199 is a binding site for 5-phospho-alpha-D-ribose 1-diphosphate.

It belongs to the UPRTase family. It depends on Mg(2+) as a cofactor.

It catalyses the reaction UMP + diphosphate = 5-phospho-alpha-D-ribose 1-diphosphate + uracil. It participates in pyrimidine metabolism; UMP biosynthesis via salvage pathway; UMP from uracil: step 1/1. Allosterically activated by GTP. In terms of biological role, catalyzes the conversion of uracil and 5-phospho-alpha-D-ribose 1-diphosphate (PRPP) to UMP and diphosphate. The chain is Uracil phosphoribosyltransferase from Psychromonas ingrahamii (strain DSM 17664 / CCUG 51855 / 37).